The following is a 346-amino-acid chain: UDP-3-O-acylglucosamine N-acyltransferase (346 aa).

Catalysis depends on His240, which acts as the Proton acceptor.

This sequence belongs to the transferase hexapeptide repeat family. LpxD subfamily. In terms of assembly, homotrimer.

The enzyme catalyses a UDP-3-O-[(3R)-3-hydroxyacyl]-alpha-D-glucosamine + a (3R)-hydroxyacyl-[ACP] = a UDP-2-N,3-O-bis[(3R)-3-hydroxyacyl]-alpha-D-glucosamine + holo-[ACP] + H(+). Its pathway is bacterial outer membrane biogenesis; LPS lipid A biosynthesis. Functionally, catalyzes the N-acylation of UDP-3-O-acylglucosamine using 3-hydroxyacyl-ACP as the acyl donor. Is involved in the biosynthesis of lipid A, a phosphorylated glycolipid that anchors the lipopolysaccharide to the outer membrane of the cell. The chain is UDP-3-O-acylglucosamine N-acyltransferase from Bacteroides thetaiotaomicron (strain ATCC 29148 / DSM 2079 / JCM 5827 / CCUG 10774 / NCTC 10582 / VPI-5482 / E50).